Consider the following 142-residue polypeptide: gSG7 salivary protein (142 aa).

A signal peptide spans 1 to 26 (MAVRMTVILPLAMALICLMQAEPATA). Disulfide bonds link Cys84/Cys139 and Cys107/Cys117.

As to quaternary structure, associates with activated host C3-convertase complex C3bBb (C3-CFB). Interacts with host properdin (CFP), a regulator of the alternate pathway of complement. In terms of tissue distribution, female salivary gland (at protein level).

Its subcellular location is the secreted. In terms of biological role, salivary protein that potently inhibits the alternative pathway of complement system activation in the host while having no inhibitory effect on the classical or lectin pathways. Binds and stabilizes activated host C3-convertase complex C3bBb (C3-CFB) and inhibits its convertase activity. Enhances accumulation of C3bBb on immobilized properdin. In Anopheles albimanus (New world malaria mosquito), this protein is gSG7 salivary protein.